We begin with the raw amino-acid sequence, 217 residues long: Protein GrpE (217 aa).

The disordered stretch occupies residues 1–63 (MAETSNSENK…AADSELSLQS (63 aa)). Residues 10 to 32 (KTSEEAKASEKNSRSITLEETKL) show a composition bias toward basic and acidic residues. A compositionally biased stretch (low complexity) spans 37-63 (SEESTQTTESTQAQAAEAADSELSLQS).

It belongs to the GrpE family. Homodimer.

The protein localises to the cytoplasm. Functionally, participates actively in the response to hyperosmotic and heat shock by preventing the aggregation of stress-denatured proteins, in association with DnaK and GrpE. It is the nucleotide exchange factor for DnaK and may function as a thermosensor. Unfolded proteins bind initially to DnaJ; upon interaction with the DnaJ-bound protein, DnaK hydrolyzes its bound ATP, resulting in the formation of a stable complex. GrpE releases ADP from DnaK; ATP binding to DnaK triggers the release of the substrate protein, thus completing the reaction cycle. Several rounds of ATP-dependent interactions between DnaJ, DnaK and GrpE are required for fully efficient folding. The sequence is that of Protein GrpE from Leptospira borgpetersenii serovar Hardjo-bovis (strain JB197).